The following is a 463-amino-acid chain: Golgi-associated PDZ and coiled-coil motif-containing protein (463 aa).

Serine 2 is subject to N-acetylserine. Positions 85–201 (AQTVSQINHK…RHIAVLQAEV (117 aa)) form a coiled coil. One can recognise a PDZ domain in the interval 289 to 372 (KVLLLKEDHE…EIEFEVVYVA (84 aa)). Residues serine 402 and serine 405 each carry the phosphoserine modification.

As to quaternary structure, homooligomer. Interacts with FZD5. Interacts with FZD8. Interacts with GRID2 and BECN1. Interacts with CSPG5. Interacts with CLCN3. Interacts with STX6. Interacts with CFTR. Interacts with ASIC3. Interacts with GOLGA3. Interacts with NLGN1. Interacts with RHOQ. Interacts with MARCHF2; the interaction leads to CFTR ubiquitination and degradation. May interact with CACNG2. Interacts with CCDC62. Ubiquitously expressed (at protein level). Expressed in dorsal root glanglion (DRG), spinal cord and brain. Isoform 1 is preferentially expressed in whole brain (at protein level) and cerebellum. Expressed in spermatocytes and spermatides but not in Sertoli cells and spermatogonia.

The protein resides in the cytoplasm. It is found in the golgi apparatus membrane. The protein localises to the golgi apparatus. Its subcellular location is the trans-Golgi network membrane. It localises to the synapse. The protein resides in the postsynaptic density. It is found in the cell projection. The protein localises to the dendrite. Its function is as follows. Plays a role in intracellular protein trafficking and degradation. May regulate CFTR chloride currents and acid-induced ASIC3 currents by modulating cell surface expression of both channels. May also regulate the intracellular trafficking of the ADR1B receptor. May play a role in autophagy. Together with MARCHF2 mediates the ubiquitination and lysosomal degradation of CFTR. Overexpression results in CFTR intracellular retention and degradation in the lysosomes. The chain is Golgi-associated PDZ and coiled-coil motif-containing protein from Mus musculus (Mouse).